A 273-amino-acid chain; its full sequence is Terpene cyclase ascF (273 aa).

A run of 7 helical transmembrane segments spans residues 18-38 (VYEA…ILIA), 49-69 (MPLF…LWVV), 78-98 (MTIW…HGVL), 113-133 (ILVG…SWWI), 153-173 (YWAV…MLCV), 178-198 (GGVS…GLNM), and 217-237 (APAV…GFVL).

It belongs to the paxB family.

The protein localises to the membrane. The catalysed reaction is ilicicolin A epoxide = ilicicolin C. The protein operates within secondary metabolite biosynthesis; terpenoid biosynthesis. Terpene cyclase; part of the asc-1 gene cluster that mediates the biosynthesis of both ascochlorin and ascofuranone, a strong inhibitor of cyanide-insensitive alternative oxidases and a promising drug candidate against African trypanosomiasis. The first step in the pathway is performed by the non-reducing polyketide synthase ascC that produces orsellinic acid by condensing acetyl-CoA with 3 malonyl-CoA units. Orsellinic acid is then prenylated by the prenyltransferase ascA to yield ilicicolinic acid B. Ilicicolinic acid B is further reduced to ilicicolin B by the reductase ascB. The halogenase ascD then chlorinates ilicicolin B to produce ilicicolin A which is converted to ilicicolin A epoxide by the cytochrome P450 monooxygenase ascE that catalyzes stereoselective epoxidation of the terminal double bond of the prenyl group. Ilicicolin A epoxide is the last common precursor for the biosynthesis of ascofuranone and ascochlorin. The terpene cyclase ascF produces a monocyclic terpene, and the cyclization reaction is proposed to be initiated by protonation of the terminal epoxide of ilicicolin A epoxide to generate a monocyclic tertiarycation, which is followed by a series of hydride and methyl shifts with abstraction of proton, leading to the formation of the (14S,15R,19R)-trimethylcyclohexanone ring structure of ilicicolin C, which is finally reduced to ascochlorin by the dehydrogenase ascG. On the other hand, ilicicolin A epoxide is hydroxylated by the cytochrome P450 monooxygenase ascH, and the resultant product is cyclized by the terpene cyclase ascI to ascofuranol via protonation-initiated epoxide ring opening, which facilitates the 6-endo-tet cyclization to form the tetrahy-drofuran ring. Finally, ascofuranol is oxidized into ascofuranone by ascJ. In Acremonium egyptiacum (Oospora egyptiaca), this protein is Terpene cyclase ascF.